The sequence spans 989 residues: Presequence protease, mitochondrial (989 aa).

The N-terminal 16 residues, 1–16, are a transit peptide targeting the mitochondrion; it reads MLRFQRFASSYAQAQA. Residue H84 coordinates Zn(2+). The active-site Proton acceptor is the E87. H88 is a Zn(2+) binding site. The active site involves E160. E185 lines the Zn(2+) pocket. S920 is subject to Phosphoserine. 972–979 contacts ATP; that stretch reads GPGIEGKT.

It belongs to the peptidase M16 family. PreP subfamily. As to quaternary structure, monomer and homodimer; homodimerization is induced by binding of the substrate. Requires Zn(2+) as cofactor.

The protein localises to the mitochondrion intermembrane space. It localises to the mitochondrion matrix. With respect to regulation, activated by nucleotides, including ATP, GTP, CTP, UTP, and ADP. Activated by copper, manganese, calcium and magnesium ions; copper and manganese restore activity following inactivation by EDTA (ethylenediaminetetraacetic acid). Inhibited by metal chelators including EDTA, EGTA (ethylene glycol bis(2-aminoethyl)tetraacetic acid), and 1,10-phenanthroline. Inhibited by copper, zinc, and iron ions. Also inhibited by dithiothreitol p-mercuribenzenesulfonic acid, N-ethylmaleimide, protoporphyrin, hemin, protamine and triarginine. Degrades mitochondrial transit peptides after their cleavage in the intermembrane space or in the matrix, and presequence peptides; clearance of these peptides is required to keep the presequence processing machinery running. Preferentially cleaves the N-terminal side of paired basic amino acid residues. Also degrades other unstructured peptides. May function as an ATP-dependent peptidase as opposed to a metalloendopeptidase. The protein is Presequence protease, mitochondrial of Saccharomyces cerevisiae (strain ATCC 204508 / S288c) (Baker's yeast).